Here is a 459-residue protein sequence, read N- to C-terminus: Cysteine--tRNA ligase (459 aa).

Residue Cys28 coordinates Zn(2+). The 'HIGH' region signature appears at 30 to 40 (VTVYDLCHFGH). Residues Cys209, His234, and Glu238 each coordinate Zn(2+). The 'KMSKS' region motif lies at 266–270 (KMSKS). Lys269 is an ATP binding site.

The protein belongs to the class-I aminoacyl-tRNA synthetase family. In terms of assembly, monomer. It depends on Zn(2+) as a cofactor.

It localises to the cytoplasm. The catalysed reaction is tRNA(Cys) + L-cysteine + ATP = L-cysteinyl-tRNA(Cys) + AMP + diphosphate. This is Cysteine--tRNA ligase from Glaesserella parasuis serovar 5 (strain SH0165) (Haemophilus parasuis).